We begin with the raw amino-acid sequence, 139 residues long: S-protein homolog 14 (139 aa).

Residues 1 to 20 form the signal peptide; it reads MNRFIIFMFVVVTYFGLNVA. The N-linked (GlcNAc...) asparagine glycan is linked to asparagine 136.

The protein belongs to the plant self-incompatibility (S1) protein family.

The protein localises to the secreted. The protein is S-protein homolog 14 of Arabidopsis thaliana (Mouse-ear cress).